Reading from the N-terminus, the 530-residue chain is Phosphoenolpyruvate carboxykinase (ATP) (530 aa).

Substrate-binding residues include arginine 60, tyrosine 195, and lysine 201. ATP is bound by residues lysine 201, histidine 221, and 237–245 (GLSGTGKTT). Mn(2+) contacts are provided by lysine 201 and histidine 221. Aspartate 258 provides a ligand contact to Mn(2+). ATP-binding residues include glutamate 286, arginine 324, and serine 449. Arginine 324 contacts substrate.

This sequence belongs to the phosphoenolpyruvate carboxykinase (ATP) family. The cofactor is Mn(2+).

The protein resides in the cytoplasm. The enzyme catalyses oxaloacetate + ATP = phosphoenolpyruvate + ADP + CO2. Its pathway is carbohydrate biosynthesis; gluconeogenesis. Involved in the gluconeogenesis. Catalyzes the conversion of oxaloacetate (OAA) to phosphoenolpyruvate (PEP) through direct phosphoryl transfer between the nucleoside triphosphate and OAA. In Geobacter metallireducens (strain ATCC 53774 / DSM 7210 / GS-15), this protein is Phosphoenolpyruvate carboxykinase (ATP).